A 728-amino-acid chain; its full sequence is Bacteriophytochrome (728 aa).

Cysteine 12 is an a tetrapyrrole binding site. The interval 17-495 is chromophore binding domain; sequence IHVPGAIQPH…RLDLMELCLN (479 aa). The GAF domain maps to 139 to 303; that stretch reads DTASLLSNVT…IFSQVCSAIV (165 aa). Residues 510 to 721 enclose the Histidine kinase domain; the sequence is VLGHDLRNPL…TFCLRLPVRQ (212 aa). Phosphohistidine; by autocatalysis is present on histidine 513.

This sequence in the N-terminal section; belongs to the phytochrome family. Contains one covalently linked tetrapyrrole chromophore.

The enzyme catalyses ATP + protein L-histidine = ADP + protein N-phospho-L-histidine.. Photoreceptor which exists in two forms that are reversibly interconvertible by light: the R form that absorbs maximally in the red region of the spectrum and the FR form that absorbs maximally in the far-red region. This is Bacteriophytochrome (bphP) from Pseudomonas aeruginosa (strain ATCC 15692 / DSM 22644 / CIP 104116 / JCM 14847 / LMG 12228 / 1C / PRS 101 / PAO1).